Reading from the N-terminus, the 140-residue chain is Biopolymer transport protein exbD1 (140 aa).

Residues 1 to 16 are Cytoplasmic-facing; that stretch reads MAFSSGNSGGPMADIN. The helical transmembrane segment at 17-37 threads the bilayer; the sequence is VTPLVDVMLVLLIIFIITAPL. Residues 38–140 are Periplasmic-facing; sequence MSHKVKVELP…GFVATKEKGQ (103 aa).

It belongs to the ExbD/TolR family. As to quaternary structure, the accessory proteins ExbB and ExbD seem to form a complex with TonB.

Its subcellular location is the cell inner membrane. In terms of biological role, involved in the TonB-dependent energy-dependent transport of various receptor-bound substrates. This Xanthomonas campestris pv. campestris (strain B100) protein is Biopolymer transport protein exbD1 (exbD1).